A 485-amino-acid polypeptide reads, in one-letter code: tRNA sulfurtransferase (485 aa).

The region spanning 63 to 167 (ERYAERLACI…NEHLYLVEKR (105 aa)) is the THUMP domain. ATP-binding positions include 185-186 (LI), Lys-267, Gly-289, and Gln-298. A disulfide bridge connects residues Cys-346 and Cys-458. A Rhodanese domain is found at 406–484 (VSGGEVVVDI…GYHNVKVYRP (79 aa)). The Cysteine persulfide intermediate role is filled by Cys-458.

It belongs to the ThiI family.

The protein localises to the cytoplasm. The enzyme catalyses [ThiI sulfur-carrier protein]-S-sulfanyl-L-cysteine + a uridine in tRNA + 2 reduced [2Fe-2S]-[ferredoxin] + ATP + H(+) = [ThiI sulfur-carrier protein]-L-cysteine + a 4-thiouridine in tRNA + 2 oxidized [2Fe-2S]-[ferredoxin] + AMP + diphosphate. The catalysed reaction is [ThiS sulfur-carrier protein]-C-terminal Gly-Gly-AMP + S-sulfanyl-L-cysteinyl-[cysteine desulfurase] + AH2 = [ThiS sulfur-carrier protein]-C-terminal-Gly-aminoethanethioate + L-cysteinyl-[cysteine desulfurase] + A + AMP + 2 H(+). The protein operates within cofactor biosynthesis; thiamine diphosphate biosynthesis. Its function is as follows. Catalyzes the ATP-dependent transfer of a sulfur to tRNA to produce 4-thiouridine in position 8 of tRNAs, which functions as a near-UV photosensor. Also catalyzes the transfer of sulfur to the sulfur carrier protein ThiS, forming ThiS-thiocarboxylate. This is a step in the synthesis of thiazole, in the thiamine biosynthesis pathway. The sulfur is donated as persulfide by IscS. This Shewanella loihica (strain ATCC BAA-1088 / PV-4) protein is tRNA sulfurtransferase.